Here is a 203-residue protein sequence, read N- to C-terminus: DNA-binding transcriptional repressor ScoC (203 aa).

In terms of domain architecture, HTH marR-type spans 13-157; it reads ALVFTQKMAQ…MMCMIRHIYG (145 aa). The segment at residues 63–86 is a DNA-binding region (H-T-H motif); sequence ISEIAKFGVMHVSTAFNFSKKLEE. The segment at 183–203 is disordered; sequence KKKAKDSAADEPAEELEPVNS. Positions 191-203 are enriched in acidic residues; it reads ADEPAEELEPVNS.

Homodimer. Interacts with SinR.

Negative regulator of protease production and sporulation. Acts by binding directly to the promoter of protease genes (aprE and nprE), and by repressing oligopeptide permease operons (appABCDF and oppABCDF), thereby preventing uptake of oligopeptides required for initiation of sporulation. Acts with SinR as a corepressor of epr expression. Binds to non-m6A-5-methylated 5'-GACGAG-3' sites, tested with scpA; when the target is methylated by DnmA, this repressor no longer binds and transcription is up-regulated. This chain is DNA-binding transcriptional repressor ScoC, found in Bacillus subtilis (strain 168).